A 278-amino-acid polypeptide reads, in one-letter code: HTH-type transcriptional activator RhaS (278 aa).

Residues 174–272 enclose the HTH araC/xylS-type domain; sequence NLLLAWLEDH…NWSPRDIRQG (99 aa). DNA-binding regions (H-T-H motif) lie at residues 191–212 and 239–262; these read DAVA…KQQT and VTDI…RREF.

As to quaternary structure, binds DNA as a dimer.

The protein localises to the cytoplasm. Its function is as follows. Activates expression of the rhaBAD and rhaT operons. The chain is HTH-type transcriptional activator RhaS from Shigella sonnei (strain Ss046).